Consider the following 619-residue polypeptide: Dihydroxy-acid dehydratase (619 aa).

Asp-81 serves as a coordination point for Mg(2+). [2Fe-2S] cluster is bound at residue Cys-122. Positions 123 and 124 each coordinate Mg(2+). Lys-124 carries the N6-carboxylysine modification. Residue Cys-195 coordinates [2Fe-2S] cluster. Residue Glu-492 participates in Mg(2+) binding. Residue Ser-518 is the Proton acceptor of the active site.

Belongs to the IlvD/Edd family. As to quaternary structure, homodimer. It depends on [2Fe-2S] cluster as a cofactor. Mg(2+) serves as cofactor.

The catalysed reaction is (2R)-2,3-dihydroxy-3-methylbutanoate = 3-methyl-2-oxobutanoate + H2O. It carries out the reaction (2R,3R)-2,3-dihydroxy-3-methylpentanoate = (S)-3-methyl-2-oxopentanoate + H2O. It functions in the pathway amino-acid biosynthesis; L-isoleucine biosynthesis; L-isoleucine from 2-oxobutanoate: step 3/4. It participates in amino-acid biosynthesis; L-valine biosynthesis; L-valine from pyruvate: step 3/4. In terms of biological role, functions in the biosynthesis of branched-chain amino acids. Catalyzes the dehydration of (2R,3R)-2,3-dihydroxy-3-methylpentanoate (2,3-dihydroxy-3-methylvalerate) into 2-oxo-3-methylpentanoate (2-oxo-3-methylvalerate) and of (2R)-2,3-dihydroxy-3-methylbutanoate (2,3-dihydroxyisovalerate) into 2-oxo-3-methylbutanoate (2-oxoisovalerate), the penultimate precursor to L-isoleucine and L-valine, respectively. The protein is Dihydroxy-acid dehydratase of Synechococcus elongatus (strain ATCC 33912 / PCC 7942 / FACHB-805) (Anacystis nidulans R2).